The primary structure comprises 190 residues: A-type ATP synthase subunit E (190 aa).

This sequence belongs to the V-ATPase E subunit family. Has multiple subunits with at least A(3), B(3), C, D, E, F, H, I and proteolipid K(x).

It localises to the cell membrane. Component of the A-type ATP synthase that produces ATP from ADP in the presence of a proton gradient across the membrane. The chain is A-type ATP synthase subunit E from Pyrobaculum islandicum (strain DSM 4184 / JCM 9189 / GEO3).